The chain runs to 555 residues: Alpha-copaene synthase (555 aa).

Aspartate 312, aspartate 316, aspartate 452, serine 456, and glutamate 460 together coordinate Mg(2+). The DDXXD motif motif lies at 312-316 (DDTYD).

It belongs to the terpene synthase family. Mg(2+) is required as a cofactor. Mainly expressed in sunflower trichomes.

The catalysed reaction is (2E,6E)-farnesyl diphosphate = alpha-copaene + diphosphate. It carries out the reaction (2E,6E)-farnesyl diphosphate = alpha-muurolene + diphosphate. The enzyme catalyses (2E,6E)-farnesyl diphosphate = alpha-humulene + diphosphate. It participates in secondary metabolite biosynthesis; terpenoid biosynthesis. Involved in the biosynthesis of germacrene-derived sesquiterpene lactones. Catalyzes the cyclization of farnesyl diphosphate to alpha-copaene, delta-cadinene, alpha-muurolene, beta-caryophyllene and alpha-humulene. In Helianthus annuus (Common sunflower), this protein is Alpha-copaene synthase (CS).